Reading from the N-terminus, the 156-residue chain is MSRRHSAEKREVLPDPKFKDIIVTKFMNQIMRDGKKSVAERIVYGAFDLVETRAKKNPVEVFHNALEAVAPAVEVRSRRVGGATYQVPVEVRTERRQALAIRWLAAAAAGRNENTMRERLAGELMDASQGRGNAVKKREDTHRMADANKAFAHYRW.

It belongs to the universal ribosomal protein uS7 family. As to quaternary structure, part of the 30S ribosomal subunit. Contacts proteins S9 and S11.

One of the primary rRNA binding proteins, it binds directly to 16S rRNA where it nucleates assembly of the head domain of the 30S subunit. Is located at the subunit interface close to the decoding center, probably blocks exit of the E-site tRNA. The polypeptide is Small ribosomal subunit protein uS7 (Hyphomonas neptunium (strain ATCC 15444)).